The primary structure comprises 807 residues: Oxysterol-binding protein 1 (807 aa).

An N-acetylalanine modification is found at alanine 2. The interval glycine 61 to glycine 86 is disordered. Positions glycine 77–glycine 86 are enriched in gly residues. The PH domain occupies glycine 88–alanine 181. Leucine 117–serine 122 lines the a 1,2-diacyl-sn-glycero-3-phospho-(1D-myo-inositol 4-phosphate) pocket. 5 positions are modified to phosphoserine: serine 190, serine 193, serine 198, serine 238, and serine 240. Residues glutamine 291–threonine 326 adopt a coiled-coil conformation. A 20-hydroxycholesterol-binding site is contributed by glutamine 314. 25-hydroxycholesterol is bound at residue glutamine 314. A 7beta-hydroxycholesterol-binding site is contributed by glutamine 314. A cholesterol-binding site is contributed by glutamine 314. An ergosterol-binding site is contributed by glutamine 314. A disordered region spans residues proline 329–glutamate 353. 3 positions are modified to phosphoserine: serine 338, serine 345, and serine 351. The FFAT signature appears at glutamate 358 to glutamate 364. A Phosphothreonine modification is found at threonine 377. Phosphoserine occurs at positions 379, 382, 385, 386, and 389. Residues lysine 493 to asparagine 496 and histidine 522 to histidine 523 each bind a 1,2-diacyl-sn-glycero-3-phospho-(1D-myo-inositol 4-phosphate). A disordered region spans residues threonine 710–glutamate 759. Residues serine 715–glutamate 759 show a composition bias toward basic and acidic residues. The stretch at aspartate 730–aspartate 760 forms a coiled coil.

Belongs to the OSBP family. Homodimer or homotrimer. Interacts (via FFAT motif) with VAPA. Interacts (via C-terminus) with RELCH (via the third HEAT repeat). Found in a complex composed of RELCH, OSBP1 and RAB11A. In terms of tissue distribution, widely expressed.

It is found in the cytoplasm. The protein localises to the cytosol. The protein resides in the perinuclear region. It localises to the golgi apparatus membrane. Its subcellular location is the endoplasmic reticulum membrane. It is found in the golgi apparatus. The protein localises to the trans-Golgi network. Functionally, lipid transporter involved in lipid countertransport between the Golgi complex and membranes of the endoplasmic reticulum: specifically exchanges sterol with phosphatidylinositol 4-phosphate (PI4P), delivering sterol to the Golgi in exchange for PI4P, which is degraded by the SAC1/SACM1L phosphatase in the endoplasmic reticulum. Binds cholesterol and a range of oxysterols including 25-hydroxycholesterol. Cholesterol binding promotes the formation of a complex with PP2A and a tyrosine phosphatase which dephosphorylates ERK1/2, whereas 25-hydroxycholesterol causes its disassembly. Regulates cholesterol efflux by decreasing ABCA1 stability. The sequence is that of Oxysterol-binding protein 1 from Homo sapiens (Human).